The chain runs to 304 residues: Quinolinate synthase (304 aa).

The iminosuccinate site is built by His24 and Ser41. Cys86 provides a ligand contact to [4Fe-4S] cluster. Residues 112 to 114 and Ser129 contribute to the iminosuccinate site; that span reads YVN. Cys171 is a [4Fe-4S] cluster binding site. Iminosuccinate is bound by residues 197-199 and Thr214; that span reads HPE. Cys259 is a [4Fe-4S] cluster binding site.

The protein belongs to the quinolinate synthase family. Type 2 subfamily. [4Fe-4S] cluster serves as cofactor.

The protein resides in the cytoplasm. It catalyses the reaction iminosuccinate + dihydroxyacetone phosphate = quinolinate + phosphate + 2 H2O + H(+). It participates in cofactor biosynthesis; NAD(+) biosynthesis; quinolinate from iminoaspartate: step 1/1. Functionally, catalyzes the condensation of iminoaspartate with dihydroxyacetone phosphate to form quinolinate. The polypeptide is Quinolinate synthase (Geobacter sp. (strain M21)).